The chain runs to 253 residues: uncharacterized protein (253 aa).

Residue 10-34 (LVTGASSGLGRGLALWLARRGVRVF) participates in NADP(+) binding. Residue serine 142 participates in substrate binding. Tyrosine 155 acts as the Proton acceptor in catalysis.

It belongs to the short-chain dehydrogenases/reductases (SDR) family.

This is an uncharacterized protein from Myxococcus xanthus (strain DK1622).